A 180-amino-acid polypeptide reads, in one-letter code: Large ribosomal subunit protein uL6 (180 aa).

This sequence belongs to the universal ribosomal protein uL6 family. As to quaternary structure, part of the 50S ribosomal subunit.

Its function is as follows. This protein binds to the 23S rRNA, and is important in its secondary structure. It is located near the subunit interface in the base of the L7/L12 stalk, and near the tRNA binding site of the peptidyltransferase center. The polypeptide is Large ribosomal subunit protein uL6 (Clostridioides difficile (strain 630) (Peptoclostridium difficile)).